Here is a 752-residue protein sequence, read N- to C-terminus: Phosphoribosylformylglycinamidine synthase subunit PurL (752 aa).

Histidine 58 is a catalytic residue. ATP-binding residues include tyrosine 61 and lysine 103. A Mg(2+)-binding site is contributed by glutamate 105. Substrate contacts are provided by residues 106–109 and arginine 128; that span reads SHNH. Histidine 107 serves as the catalytic Proton acceptor. Aspartate 129 contacts Mg(2+). Glutamine 253 is a substrate binding site. Aspartate 281 serves as a coordination point for Mg(2+). 325 to 327 is a binding site for substrate; the sequence is ESQ. Residues aspartate 513 and glycine 550 each coordinate ATP. Position 551 (asparagine 551) interacts with Mg(2+). Serine 553 lines the substrate pocket.

The protein belongs to the FGAMS family. In terms of assembly, monomer. Part of the FGAM synthase complex composed of 1 PurL, 1 PurQ and 2 PurS subunits.

It localises to the cytoplasm. The catalysed reaction is N(2)-formyl-N(1)-(5-phospho-beta-D-ribosyl)glycinamide + L-glutamine + ATP + H2O = 2-formamido-N(1)-(5-O-phospho-beta-D-ribosyl)acetamidine + L-glutamate + ADP + phosphate + H(+). It participates in purine metabolism; IMP biosynthesis via de novo pathway; 5-amino-1-(5-phospho-D-ribosyl)imidazole from N(2)-formyl-N(1)-(5-phospho-D-ribosyl)glycinamide: step 1/2. Part of the phosphoribosylformylglycinamidine synthase complex involved in the purines biosynthetic pathway. Catalyzes the ATP-dependent conversion of formylglycinamide ribonucleotide (FGAR) and glutamine to yield formylglycinamidine ribonucleotide (FGAM) and glutamate. The FGAM synthase complex is composed of three subunits. PurQ produces an ammonia molecule by converting glutamine to glutamate. PurL transfers the ammonia molecule to FGAR to form FGAM in an ATP-dependent manner. PurS interacts with PurQ and PurL and is thought to assist in the transfer of the ammonia molecule from PurQ to PurL. This is Phosphoribosylformylglycinamidine synthase subunit PurL from Streptomyces avermitilis (strain ATCC 31267 / DSM 46492 / JCM 5070 / NBRC 14893 / NCIMB 12804 / NRRL 8165 / MA-4680).